Reading from the N-terminus, the 153-residue chain is Nucleoside diphosphate kinase (153 aa).

ATP contacts are provided by K13, F61, R89, T95, R106, and N116. H119 acts as the Pros-phosphohistidine intermediate in catalysis.

It belongs to the NDK family. Requires Mg(2+) as cofactor. As to expression, highest levels in the liver and kidney with lower levels in the heart, brain and breast muscle.

It localises to the cytoplasm. The protein localises to the cell membrane. The catalysed reaction is a 2'-deoxyribonucleoside 5'-diphosphate + ATP = a 2'-deoxyribonucleoside 5'-triphosphate + ADP. The enzyme catalyses a ribonucleoside 5'-diphosphate + ATP = a ribonucleoside 5'-triphosphate + ADP. In terms of biological role, major role in the synthesis of nucleoside triphosphates other than ATP. The ATP gamma phosphate is transferred to the NDP beta phosphate via a ping-pong mechanism, using a phosphorylated active-site intermediate. This Columba livia (Rock dove) protein is Nucleoside diphosphate kinase.